Consider the following 156-residue polypeptide: SsrA-binding protein (156 aa).

Belongs to the SmpB family.

The protein resides in the cytoplasm. In terms of biological role, required for rescue of stalled ribosomes mediated by trans-translation. Binds to transfer-messenger RNA (tmRNA), required for stable association of tmRNA with ribosomes. tmRNA and SmpB together mimic tRNA shape, replacing the anticodon stem-loop with SmpB. tmRNA is encoded by the ssrA gene; the 2 termini fold to resemble tRNA(Ala) and it encodes a 'tag peptide', a short internal open reading frame. During trans-translation Ala-aminoacylated tmRNA acts like a tRNA, entering the A-site of stalled ribosomes, displacing the stalled mRNA. The ribosome then switches to translate the ORF on the tmRNA; the nascent peptide is terminated with the 'tag peptide' encoded by the tmRNA and targeted for degradation. The ribosome is freed to recommence translation, which seems to be the essential function of trans-translation. This chain is SsrA-binding protein, found in Lactiplantibacillus plantarum (strain ATCC BAA-793 / NCIMB 8826 / WCFS1) (Lactobacillus plantarum).